A 315-amino-acid polypeptide reads, in one-letter code: tRNA wybutosine-synthesizing protein 5 (315 aa).

The region spanning 102-267 (DEKYYLRSLG…YDTTDTYGNK (166 aa)) is the JmjC domain. Y106 is a 2-oxoglutarate binding site. Fe cation is bound by residues H160 and D162. The 2-oxoglutarate site is built by N166 and K175. Position 235 (H235) interacts with Fe cation.

Belongs to the TYW5 family. Homodimer. The cofactor is Fe(2+).

The enzyme catalyses 7-[(3S)-3-amino-3-carboxypropyl]wyosine(37) in tRNA(Phe) + 2-oxoglutarate + O2 = 7-(2-hydroxy-3-amino-3-carboxypropyl)wyosine(37) in tRNA(Phe) + succinate + CO2. It participates in tRNA modification; wybutosine-tRNA(Phe) biosynthesis. Its function is as follows. tRNA hydroxylase that acts as a component of the wybutosine biosynthesis pathway. Wybutosine is a hyper modified guanosine with a tricyclic base found at the 3'-position adjacent to the anticodon of eukaryotic phenylalanine tRNA. Catalyzes the hydroxylation of 7-(a-amino-a-carboxypropyl)wyosine (yW-72) into undermodified hydroxywybutosine (OHyW*). OHyW* being further transformed into hydroxywybutosine (OHyW) by LCMT2/TYW4. OHyW is a derivative of wybutosine found in higher eukaryotes. In Mus musculus (Mouse), this protein is tRNA wybutosine-synthesizing protein 5 (Tyw5).